The primary structure comprises 160 residues: Putative UPF0479 protein YBL113W-A (160 aa).

A run of 2 helical transmembrane segments spans residues 39 to 59 and 136 to 156; these read IVFC…KVLQ and VPMI…ISQH.

Belongs to the UPF0479 family.

It is found in the membrane. The protein is Putative UPF0479 protein YBL113W-A of Saccharomyces cerevisiae (strain ATCC 204508 / S288c) (Baker's yeast).